Reading from the N-terminus, the 373-residue chain is 3-dehydroquinate synthase (373 aa).

NAD(+)-binding positions include glutamate 67 to lysine 72, glycine 101 to aspartate 105, threonine 125 to threonine 126, lysine 138, and lysine 147. Glutamate 180, histidine 240, and histidine 256 together coordinate Zn(2+).

The protein belongs to the sugar phosphate cyclases superfamily. Dehydroquinate synthase family. NAD(+) is required as a cofactor. Co(2+) serves as cofactor. The cofactor is Zn(2+).

Its subcellular location is the cytoplasm. The catalysed reaction is 7-phospho-2-dehydro-3-deoxy-D-arabino-heptonate = 3-dehydroquinate + phosphate. It functions in the pathway metabolic intermediate biosynthesis; chorismate biosynthesis; chorismate from D-erythrose 4-phosphate and phosphoenolpyruvate: step 2/7. Catalyzes the conversion of 3-deoxy-D-arabino-heptulosonate 7-phosphate (DAHP) to dehydroquinate (DHQ). The sequence is that of 3-dehydroquinate synthase (aroB) from Chlamydia muridarum (strain MoPn / Nigg).